We begin with the raw amino-acid sequence, 613 residues long: MPKYRSATTTHGRNMAGARALWRATGVKEEDFGKPIIAVVNSFTQFVPGHVHLKDLGQLVAREIEAAGGIAKEFNTIAVDDGIAMGHGGMLYSLPSRELIADSVEYMVNAHCADAMVCISNCDKITPGMLMAAMRLNIPAIFVSGGPMEAGKTKLSDQIIKLDLVDAMMQGADPKVSDAQSEQIERSACPTCGSCSGMFTANSMNCLTEALGLSQPGNGSLLATHADRKQLFLTAGQRIVELTKRYYEQDDASVLPRNIANKAAFENAIALDIAMGGSTNTVLHLLAAAQEGEVEFDMTDIDRMSRQVPHLCKVAPSTQKYHMEDVHRAGGVMGILGELQRAGLLKDQTRTVLGISLQEQLAQYDVKQTQDPAVHTMFRAGPAGIRTTQAFSQDCRWDTLDDDRQEGCIRDKAHAFSQDGGLAVLKGNLAIDGCIVKTAGVDESILKFRGPAVVYESQEDAVNGILGGQVKAGDVVVIRYEGPKGGPGMQEMLYPTTYLKSMGLGKQCALLTDGRFSGGTSGLSIGHASPEAANGGTIGLVRSGDSIAIDIPNRSITLEVSESELAARRAEQDKLGWKPVDRQRTVSLALKAYASMATSADKGAVRDKSKLEG.

Aspartate 81 contributes to the Mg(2+) binding site. Cysteine 122 lines the [2Fe-2S] cluster pocket. 2 residues coordinate Mg(2+): aspartate 123 and lysine 124. The residue at position 124 (lysine 124) is an N6-carboxylysine. Cysteine 195 is a [2Fe-2S] cluster binding site. Glutamate 491 is a binding site for Mg(2+). Serine 517 acts as the Proton acceptor in catalysis.

Belongs to the IlvD/Edd family. Homodimer. Requires [2Fe-2S] cluster as cofactor. It depends on Mg(2+) as a cofactor.

It carries out the reaction (2R)-2,3-dihydroxy-3-methylbutanoate = 3-methyl-2-oxobutanoate + H2O. The enzyme catalyses (2R,3R)-2,3-dihydroxy-3-methylpentanoate = (S)-3-methyl-2-oxopentanoate + H2O. The protein operates within amino-acid biosynthesis; L-isoleucine biosynthesis; L-isoleucine from 2-oxobutanoate: step 3/4. Its pathway is amino-acid biosynthesis; L-valine biosynthesis; L-valine from pyruvate: step 3/4. Functions in the biosynthesis of branched-chain amino acids. Catalyzes the dehydration of (2R,3R)-2,3-dihydroxy-3-methylpentanoate (2,3-dihydroxy-3-methylvalerate) into 2-oxo-3-methylpentanoate (2-oxo-3-methylvalerate) and of (2R)-2,3-dihydroxy-3-methylbutanoate (2,3-dihydroxyisovalerate) into 2-oxo-3-methylbutanoate (2-oxoisovalerate), the penultimate precursor to L-isoleucine and L-valine, respectively. The protein is Dihydroxy-acid dehydratase of Vibrio cholerae serotype O1 (strain ATCC 39541 / Classical Ogawa 395 / O395).